A 728-amino-acid polypeptide reads, in one-letter code: Catalase-peroxidase (728 aa).

A cross-link (tryptophyl-tyrosyl-methioninium (Trp-Tyr) (with M-244)) is located at residues 91–218 (WHSAGTYRTA…LAAVQMGLIY (128 aa)). His-92 serves as the catalytic Proton acceptor. Residues 218–244 (YVNPEGPDGTPDPVAAAHDIRETFARM) constitute a cross-link (tryptophyl-tyrosyl-methioninium (Tyr-Met) (with W-91)). Residue His-259 participates in heme b binding.

It belongs to the peroxidase family. Peroxidase/catalase subfamily. In terms of assembly, homodimer or homotetramer. Requires heme b as cofactor. Post-translationally, formation of the three residue Trp-Tyr-Met cross-link is important for the catalase, but not the peroxidase activity of the enzyme.

It catalyses the reaction H2O2 + AH2 = A + 2 H2O. The catalysed reaction is 2 H2O2 = O2 + 2 H2O. Functionally, bifunctional enzyme with both catalase and broad-spectrum peroxidase activity. The sequence is that of Catalase-peroxidase from Burkholderia lata (strain ATCC 17760 / DSM 23089 / LMG 22485 / NCIMB 9086 / R18194 / 383).